A 146-amino-acid polypeptide reads, in one-letter code: Decoration protein (146 aa).

In terms of assembly, homotrimer. Interacts with the major capsid protein.

The protein localises to the virion. Its function is as follows. Cooperatively binds the expanded capsid, thereby stabilizing the mature capsid shell and allowing the large viral DNA to be packaged. Trimers of capsid decoration proteins molecules are located at local and icosahedral threefold axes and stabilize the expanded capsid, which shows increased spacing between capsomers. The chain is Decoration protein from Thermus thermophilus (Thermus thermophilus phage P23-45).